Here is a 180-residue protein sequence, read N- to C-terminus: Glycoprotein Xg (180 aa).

Residues 1 to 21 (MESWWGLPCLAFLCFLMHARG) form the signal peptide. Over 22-142 (QRDFDLADAL…GNPEGNMVAK (121 aa)) the chain is Extracellular. The interval 28 to 133 (ADALDDPEPT…HGGDHHSTYG (106 aa)) is disordered. Pro residues predominate over residues 47 to 57 (KPKPPYYPQPE). The chain crosses the membrane as a helical span at residues 143 to 163 (IVSPIVSVVVVTLLGAAASYF). Residues 164–180 (KLNNRRNCFRTHEPENV) are Cytoplasmic-facing.

The protein belongs to the CD99 family. Post-translationally, O-glycosylated. As to expression, expressed in erythroid tissues, including thymus, bone marrow and fetal liver, and in several nonerythroid tissues, such as heart, placenta, skeletal muscle, thyroid and trachea, as well as in skin fibroblasts. Expression is low or undetectable in other tissues.

The protein resides in the cell membrane. In Homo sapiens (Human), this protein is Glycoprotein Xg (XG).